A 437-amino-acid chain; its full sequence is Selenocysteine lyase (437 aa).

Methionine 1 is modified (N-acetylmethionine). The tract at residues 1–30 is disordered; it reads MEAAGARNRDARSRAEKSPPESRKVYMDYN. Positions 7–26 are enriched in basic and acidic residues; sequence RNRDARSRAEKSPPESRKVY. Lysine 252 is subject to N6-(pyridoxal phosphate)lysine. The active-site S-selanylcysteine intermediate is the cysteine 380.

Belongs to the class-V pyridoxal-phosphate-dependent aminotransferase family. Homodimer. Pyridoxal 5'-phosphate serves as cofactor.

It is found in the cytoplasm. It localises to the cytosol. It catalyses the reaction L-selenocysteine + AH2 = hydrogenselenide + L-alanine + A + H(+). Catalyzes the decomposition of L-selenocysteine to L-alanine and elemental selenium. This Bos taurus (Bovine) protein is Selenocysteine lyase (SCLY).